An 89-amino-acid chain; its full sequence is Small ribosomal subunit protein uS15 (89 aa).

This sequence belongs to the universal ribosomal protein uS15 family. In terms of assembly, part of the 30S ribosomal subunit. Forms a bridge to the 50S subunit in the 70S ribosome, contacting the 23S rRNA.

One of the primary rRNA binding proteins, it binds directly to 16S rRNA where it helps nucleate assembly of the platform of the 30S subunit by binding and bridging several RNA helices of the 16S rRNA. Functionally, forms an intersubunit bridge (bridge B4) with the 23S rRNA of the 50S subunit in the ribosome. The sequence is that of Small ribosomal subunit protein uS15 from Chelativorans sp. (strain BNC1).